Consider the following 44-residue polypeptide: Endochitinase 1 (44 aa).

Belongs to the glycosyl hydrolase 19 family. Chitinase class I subfamily.

The enzyme catalyses Random endo-hydrolysis of N-acetyl-beta-D-glucosaminide (1-&gt;4)-beta-linkages in chitin and chitodextrins.. Its function is as follows. Defense against chitin-containing fungal pathogens. The protein is Endochitinase 1 of Capsicum chinense (Scotch bonnet).